A 160-amino-acid chain; its full sequence is Zinc finger A20 and AN1 domain-containing stress-associated protein 6 (160 aa).

The A20-type zinc-finger motif lies at 18–52 (PEAPILCVNNCGFFGSRMTENMCSKCYRDTVKAKT). Zn(2+) is bound by residues Cys-24, Cys-28, Cys-40, and Cys-43. Positions 73 to 94 (EVTDGGSGSVADGKQVMEEDTP) are disordered. Residues 95–141 (KPPSNRCLSCRKKVGLTGFKCRCGGTFCSMHRYADSHKCTFDYKQVG) form an AN1-type zinc finger. Positions 101, 104, 115, 117, 122, 125, 131, and 133 each coordinate Zn(2+).

Its function is as follows. May be involved in environmental stress response. The sequence is that of Zinc finger A20 and AN1 domain-containing stress-associated protein 6 (SAP6) from Oryza sativa subsp. japonica (Rice).